The chain runs to 522 residues: Biotin-dependent long chain acyl-coenzyme A carboxylase beta4 subunit (522 aa).

One can recognise a CoA carboxyltransferase N-terminal domain in the interval 11–261 (TAEKLAELRE…NCFDKPPVVN (251 aa)). Positions 270–503 (GHDLELDSIV…RLLLRKSMHL (234 aa)) constitute a CoA carboxyltransferase C-terminal domain.

It belongs to the AccD/PCCB family. As to quaternary structure, the biotin-dependent long-chain acyl-CoA carboxylase (LCC) complex is composed of AccA3, which contains the biotin carboxylase (BC) and biotin carboxyl carrier protein (BCCP) domains, and AccD4, which contains the carboxyl transferase (CT) domain. The complex also contains the beta5 subunit AccD5 and the epsilon subunit AccE5. The four subunits are essential for activity, but AccD5, together with AccE5, probably plays a structural role rather than a catalytic one.

Functionally, component of a biotin-dependent acyl-CoA carboxylase complex. This subunit transfers the CO2 from carboxybiotin to the CoA ester substrate. When associated with the alpha3 subunit AccA3, the beta5 subunit AccD5 and the epsilon subunit AccE5, forms the LCC complex, which is involved in the carboxylation of long chain acyl-CoA. The LCC complex can use C16-C24 substrates, the highest specific activity is obtained with carboxy-C20-CoA. Has low activity with acetyl-CoA and propionyl-CoA. The protein is Biotin-dependent long chain acyl-coenzyme A carboxylase beta4 subunit of Mycobacterium tuberculosis (strain ATCC 25618 / H37Rv).